The chain runs to 190 residues: Large ribosomal subunit protein uL5 (190 aa).

It belongs to the universal ribosomal protein uL5 family. As to quaternary structure, part of the 50S ribosomal subunit; part of the 5S rRNA/L5/L18/L25 subcomplex. Contacts the 5S rRNA and the P site tRNA. Forms a bridge to the 30S subunit in the 70S ribosome.

Its function is as follows. This is one of the proteins that bind and probably mediate the attachment of the 5S RNA into the large ribosomal subunit, where it forms part of the central protuberance. In the 70S ribosome it contacts protein S13 of the 30S subunit (bridge B1b), connecting the 2 subunits; this bridge is implicated in subunit movement. Contacts the P site tRNA; the 5S rRNA and some of its associated proteins might help stabilize positioning of ribosome-bound tRNAs. This is Large ribosomal subunit protein uL5 from Bifidobacterium adolescentis (strain ATCC 15703 / DSM 20083 / NCTC 11814 / E194a).